We begin with the raw amino-acid sequence, 434 residues long: D-amino acid dehydrogenase (434 aa).

Position 3–17 (3–17 (VVILGSGVVGVTSAW)) interacts with FAD.

This sequence belongs to the DadA oxidoreductase family. Requires FAD as cofactor.

The enzyme catalyses a D-alpha-amino acid + A + H2O = a 2-oxocarboxylate + AH2 + NH4(+). Its pathway is amino-acid degradation; D-alanine degradation; NH(3) and pyruvate from D-alanine: step 1/1. In terms of biological role, oxidative deamination of D-amino acids. The protein is D-amino acid dehydrogenase of Yersinia pseudotuberculosis serotype O:1b (strain IP 31758).